The following is a 235-amino-acid chain: UPF0173 metal-dependent hydrolase Oant_3663 (235 aa).

The protein belongs to the UPF0173 family.

The polypeptide is UPF0173 metal-dependent hydrolase Oant_3663 (Brucella anthropi (strain ATCC 49188 / DSM 6882 / CCUG 24695 / JCM 21032 / LMG 3331 / NBRC 15819 / NCTC 12168 / Alc 37) (Ochrobactrum anthropi)).